Consider the following 209-residue polypeptide: FMN-dependent NADH:quinone oxidoreductase 2 (209 aa).

Residues S9, 15 to 17 (SVS), and 97 to 100 (MWNF) contribute to the FMN site.

It belongs to the azoreductase type 1 family. As to quaternary structure, homodimer. It depends on FMN as a cofactor.

It catalyses the reaction 2 a quinone + NADH + H(+) = 2 a 1,4-benzosemiquinone + NAD(+). The enzyme catalyses N,N-dimethyl-1,4-phenylenediamine + anthranilate + 2 NAD(+) = 2-(4-dimethylaminophenyl)diazenylbenzoate + 2 NADH + 2 H(+). Its function is as follows. Quinone reductase that provides resistance to thiol-specific stress caused by electrophilic quinones. Functionally, also exhibits azoreductase activity. Catalyzes the reductive cleavage of the azo bond in aromatic azo compounds to the corresponding amines. This Pseudomonas syringae pv. tomato (strain ATCC BAA-871 / DC3000) protein is FMN-dependent NADH:quinone oxidoreductase 2.